A 295-amino-acid chain; its full sequence is 4-hydroxy-tetrahydrodipicolinate synthase (295 aa).

Residue threonine 46 coordinates pyruvate. The active-site Proton donor/acceptor is the tyrosine 135. Catalysis depends on lysine 164, which acts as the Schiff-base intermediate with substrate. Isoleucine 205 is a binding site for pyruvate.

It belongs to the DapA family. Homotetramer; dimer of dimers.

It is found in the cytoplasm. The catalysed reaction is L-aspartate 4-semialdehyde + pyruvate = (2S,4S)-4-hydroxy-2,3,4,5-tetrahydrodipicolinate + H2O + H(+). Its pathway is amino-acid biosynthesis; L-lysine biosynthesis via DAP pathway; (S)-tetrahydrodipicolinate from L-aspartate: step 3/4. In terms of biological role, catalyzes the condensation of (S)-aspartate-beta-semialdehyde [(S)-ASA] and pyruvate to 4-hydroxy-tetrahydrodipicolinate (HTPA). This chain is 4-hydroxy-tetrahydrodipicolinate synthase, found in Wolinella succinogenes (strain ATCC 29543 / DSM 1740 / CCUG 13145 / JCM 31913 / LMG 7466 / NCTC 11488 / FDC 602W) (Vibrio succinogenes).